The primary structure comprises 156 residues: SsrA-binding protein (156 aa).

Belongs to the SmpB family.

It localises to the cytoplasm. Its function is as follows. Required for rescue of stalled ribosomes mediated by trans-translation. Binds to transfer-messenger RNA (tmRNA), required for stable association of tmRNA with ribosomes. tmRNA and SmpB together mimic tRNA shape, replacing the anticodon stem-loop with SmpB. tmRNA is encoded by the ssrA gene; the 2 termini fold to resemble tRNA(Ala) and it encodes a 'tag peptide', a short internal open reading frame. During trans-translation Ala-aminoacylated tmRNA acts like a tRNA, entering the A-site of stalled ribosomes, displacing the stalled mRNA. The ribosome then switches to translate the ORF on the tmRNA; the nascent peptide is terminated with the 'tag peptide' encoded by the tmRNA and targeted for degradation. The ribosome is freed to recommence translation, which seems to be the essential function of trans-translation. This chain is SsrA-binding protein, found in Staphylococcus carnosus (strain TM300).